Consider the following 861-residue polypeptide: ToMV resistance protein Tm-2(2) (861 aa).

A coiled-coil region spans residues 63–83 (VKNLLKDIQELAGDVEDLLDD). The 227-residue stretch at 162-388 (DDFNMLQAKL…LESMGHKVQD (227 aa)) folds into the NB-ARC domain. Residue 185–192 (GMPGLGKT) coordinates ATP. LRR repeat units lie at residues 225-248 (LDIA…NLRS), 305-327 (LHAL…IFNF), 388-411 (DGCA…CFLY), 449-472 (LAED…TYNG), 510-536 (VARL…KLEK), 585-608 (MTCL…IVKL), 609-631 (TRLE…VWES), 652-680 (ISSF…FFEP), 689-710 (LRKL…IFSP), 712-735 (LKAL…LSSY), 736-758 (PHIA…SFPP), 784-810 (LRKL…GYSF), and 811-835 (PQLE…DVSM).

Belongs to the disease resistance NB-LRR family. In terms of assembly, (Microbial infection) Interacts with tobamoviruses mouvement protein (e.g. tobacco mosaic virus (TMV) MP, AC P03583) at the plasma membrane; this interaction triggers defense responses leading to programmed cell death. Binds to HSP90 proteins (e.g. HSP90-1 and Nicotiana benthamiana HSP90-1); this interaction seems required for defense responses toward tobamoviruses.

It is found in the cell membrane. Its function is as follows. Inhibitor of viral mouvements which confers resistance to some tobamoviruses including tomato mosaic virus (ToMV) (e.g. strains L, B7 and ToMV1-2) and tobacco mosaic virus (TMV), but not to resistance-breaking isolates (e.g. LIIA and ToMV2(2)) ToMV and tomato brown rugose fruit virus (ToBRFV). Elicits a hypersensitive reaction in response to avirulent (Avr) movement proteins from resistance inducing tobamoviruses (e.g. ToMV and TMV) strains, thus leading to programmed cell death; this local extreme resistance requires rbcS. The chain is ToMV resistance protein Tm-2(2) from Solanum lycopersicum (Tomato).